The sequence spans 398 residues: CCA-adding enzyme (398 aa).

2 residues coordinate ATP: glycine 32 and arginine 35. The CTP site is built by glycine 32 and arginine 35. Residues aspartate 45 and aspartate 47 each coordinate Mg(2+). ATP-binding residues include arginine 116, aspartate 159, arginine 162, arginine 165, and arginine 168. Residues arginine 116, aspartate 159, arginine 162, arginine 165, and arginine 168 each coordinate CTP.

This sequence belongs to the tRNA nucleotidyltransferase/poly(A) polymerase family. Bacterial CCA-adding enzyme type 3 subfamily. Homodimer. Mg(2+) is required as a cofactor.

It catalyses the reaction a tRNA precursor + 2 CTP + ATP = a tRNA with a 3' CCA end + 3 diphosphate. The catalysed reaction is a tRNA with a 3' CCA end + 2 CTP + ATP = a tRNA with a 3' CCACCA end + 3 diphosphate. Catalyzes the addition and repair of the essential 3'-terminal CCA sequence in tRNAs without using a nucleic acid template. Adds these three nucleotides in the order of C, C, and A to the tRNA nucleotide-73, using CTP and ATP as substrates and producing inorganic pyrophosphate. tRNA 3'-terminal CCA addition is required both for tRNA processing and repair. Also involved in tRNA surveillance by mediating tandem CCA addition to generate a CCACCA at the 3' terminus of unstable tRNAs. While stable tRNAs receive only 3'-terminal CCA, unstable tRNAs are marked with CCACCA and rapidly degraded. This chain is CCA-adding enzyme, found in Lactobacillus johnsonii (strain CNCM I-12250 / La1 / NCC 533).